An 882-amino-acid chain; its full sequence is Piwi-like protein 3 (882 aa).

Over residues 1–15 (MPGRARTRARGRARR) the composition is skewed to basic residues. The tract at residues 1–91 (MPGRARTRAR…EAGLHTAPLQ (91 aa)) is disordered. The span at 32-46 (SATTQEPPQLQSTPR) shows a compositional bias: polar residues. Positions 293 to 406 (TAYDFIKRTS…LIPQLCHMTG (114 aa)) constitute a PAZ domain. Residues 578–868 (KVICILPNDD…LAYLVGQSIH (291 aa)) enclose the Piwi domain.

Belongs to the argonaute family. Piwi subfamily. In terms of tissue distribution, expressed in testis.

Its subcellular location is the cytoplasm. Functionally, may play a role during spermatogenesis by repressing transposable elements and preventing their mobilization, which is essential for the germline integrity. Acts via the piRNA metabolic process, which mediates the repression of transposable elements during meiosis by forming complexes composed of piRNAs and Piwi proteins and govern the methylation and subsequent repression of transposons. Directly binds piRNAs, a class of 24 to 30 nucleotide RNAs that are generated by a Dicer-independent mechanism and are primarily derived from transposons and other repeated sequence elements. Besides their function in transposable elements repression, piRNAs are probably involved in other processes during meiosis such as translation regulation. The polypeptide is Piwi-like protein 3 (PIWIL3) (Homo sapiens (Human)).